The following is a 629-amino-acid chain: MFYPDPFDVIIIGGGHAGTEAAMAAARMGQQTLLLTHNIDTLGQMSCNPAIGGIGKGHLVKEVDALGGLMAKAIDQAGIQFRILNASKGPAVRATRAQADRVLYRQAVRTALENQPNLMIFQQAVEDLIVENDRVVGAVTQMGLKFRAKAVVLTVGTFLDGKIHIGLDNYSGGRAGDPPSIPLSRRLRELPLRVGRLKTGTPPRIDARTIDFSVLAQQHGDNPMPVFSFMGNASQHPQQVPCYITHTNEKTHDVIRSNLDRSPMYAGVIEGVGPRYCPSIEDKVMRFADRNQHQIFLEPEGLTSNEIYPNGISTSLPFDVQMQIVRSMQGMENAKIVRPGYAIEYDFFDPRDLKPTLESKFIQGLFFAGQINGTTGYEEAAAQGLLAGLNAARLSADKEGWAPARSQAYLGVLVDDLCTLGTKEPYRMFTSRAEYRLMLREDNADLRLTEIGRELGLVDDERWARFNEKLENIERERQRLKSTWVTPSAEAAAEVNAHLTAPLSREASGEDLLRRPEMTYEKLTSLTPFAPALTDEQAAEQVEIQVKYEGYIARQQDEIEKQLRNENTLLPATLDYRQVSGLSNEVIAKLNDHKPASIGQASRISGVTPAAISILLVWLKKQGMLRRSA.

FAD-binding positions include 13 to 18 (GGGHAG), valine 125, and serine 180. 273-287 (GPRYCPSIEDKVMRF) is a binding site for NAD(+). Glutamine 370 serves as a coordination point for FAD.

The protein belongs to the MnmG family. As to quaternary structure, homodimer. Heterotetramer of two MnmE and two MnmG subunits. The cofactor is FAD.

It is found in the cytoplasm. NAD-binding protein involved in the addition of a carboxymethylaminomethyl (cmnm) group at the wobble position (U34) of certain tRNAs, forming tRNA-cmnm(5)s(2)U34. This Escherichia coli O127:H6 (strain E2348/69 / EPEC) protein is tRNA uridine 5-carboxymethylaminomethyl modification enzyme MnmG.